The chain runs to 252 residues: 5-oxoprolinase subunit A (252 aa).

The protein belongs to the LamB/PxpA family. Forms a complex composed of PxpA, PxpB and PxpC.

The enzyme catalyses 5-oxo-L-proline + ATP + 2 H2O = L-glutamate + ADP + phosphate + H(+). Functionally, catalyzes the cleavage of 5-oxoproline to form L-glutamate coupled to the hydrolysis of ATP to ADP and inorganic phosphate. The chain is 5-oxoprolinase subunit A from Staphylococcus saprophyticus subsp. saprophyticus (strain ATCC 15305 / DSM 20229 / NCIMB 8711 / NCTC 7292 / S-41).